The following is a 268-amino-acid chain: Tryptophan synthase alpha chain (268 aa).

Catalysis depends on proton acceptor residues Glu49 and Asp60.

The protein belongs to the TrpA family. Tetramer of two alpha and two beta chains.

It carries out the reaction (1S,2R)-1-C-(indol-3-yl)glycerol 3-phosphate + L-serine = D-glyceraldehyde 3-phosphate + L-tryptophan + H2O. The protein operates within amino-acid biosynthesis; L-tryptophan biosynthesis; L-tryptophan from chorismate: step 5/5. In terms of biological role, the alpha subunit is responsible for the aldol cleavage of indoleglycerol phosphate to indole and glyceraldehyde 3-phosphate. The sequence is that of Tryptophan synthase alpha chain from Yersinia pseudotuberculosis serotype O:1b (strain IP 31758).